The primary structure comprises 100 residues: Large ribosomal subunit protein uL23 (100 aa).

It belongs to the universal ribosomal protein uL23 family. As to quaternary structure, part of the 50S ribosomal subunit. Contacts protein L29, and trigger factor when it is bound to the ribosome.

One of the early assembly proteins it binds 23S rRNA. One of the proteins that surrounds the polypeptide exit tunnel on the outside of the ribosome. Forms the main docking site for trigger factor binding to the ribosome. In Synechococcus sp. (strain RCC307), this protein is Large ribosomal subunit protein uL23.